A 210-amino-acid chain; its full sequence is MSDMDDEITRIFKVRRTVLQMLRDRGYTIEESDLNLKREEFVQRFCKTMNKVNKEALFVSANKGPNPADKIYVFYPEGPKVGVPVIKKEVAIKMRDDKVHRGIVVVPMAITAPARMAVSELNKMLTIEVFEEAELVTNITEHKLVNKYYVLDDQAKKKLLNTYTVQDTQLPRILVTDPLARYYGLKRGQVVKIRRSDATSLDYYTYRFAV.

This sequence belongs to the archaeal Rpo5/eukaryotic RPB5 RNA polymerase subunit family.

Its subcellular location is the nucleus. This is DNA-directed RNA polymerase subunit 5-like protein 1 (NRPB5L1) from Arabidopsis thaliana (Mouse-ear cress).